Here is a 278-residue protein sequence, read N- to C-terminus: MVRGAGPGPSLSALSHPTGASGMAAAEGPGYLVSPQAEKHRRARNWTDAEMRGLMLVWEEFFDELKQTKRNAKVYEKMASKLFEMTGERRLGEEIKIKITNMTFQYRKLKCMTDSESAPPDWPYYLAIDGILAKVPESCDGKLPDSQPPGPSTSQTEASLSPPAKSTPLYFPYNQCSYEGRFEDDRSDSSSSLLSLKFRSEERPVKKRKVQSCHLQKKQLRLLEAMVEEQRRLSRAVEETCREVRRVLDQQHILQVQSLQLQERMMSLLERIITKSSV.

A disordered region spans residues 1–27 (MVRGAGPGPSLSALSHPTGASGMAAAE). The 86-residue stretch at 44 to 129 (RNWTDAEMRG…PDWPYYLAID (86 aa)) folds into the Myb-like domain. Positions 138 to 168 (SCDGKLPDSQPPGPSTSQTEASLSPPAKSTP) are disordered.

The sequence is that of Myb/SANT-like DNA-binding domain-containing protein 1 (MSANTD1) from Homo sapiens (Human).